The chain runs to 309 residues: MPDLESIVKDIAAEMRARPDRGAVASYIPELARVDAQGFGLVVIDGEGRVAAGGDADTPFSIQSISKVFTLTLALGMVGDRLWRRVGREPSGSPFNSIVQLEREHGIPRNPFINAGAIAVTDLILSGHQPREALGEILRFMQFVAQDDSITIDERVAASEKRTGFRNAALANYMRSFDVIENPVDYTLGVYFHHCAIAMTCRQLATAGLFLAYSGHHPLAGHSVISAERARRINAIMLTCGHYDGSGDFAYRVGLPGKSGVGGGILAVAPGKASICVWSPGLDAAGNSHLGRIALEMLVKRTGWSIFGV.

7 residues coordinate substrate: Ser-64, Asn-114, Glu-160, Asn-167, Tyr-191, Tyr-243, and Val-261.

It belongs to the glutaminase family. As to quaternary structure, homotetramer.

It catalyses the reaction L-glutamine + H2O = L-glutamate + NH4(+). This chain is Glutaminase, found in Methylorubrum extorquens (strain CM4 / NCIMB 13688) (Methylobacterium extorquens).